Here is a 620-residue protein sequence, read N- to C-terminus: Mitochondrial Rho GTPase 2 (620 aa).

Residues 1–594 (MRRDVRILLL…ELHPTSFWLR (594 aa)) lie on the Cytoplasmic side of the membrane. The Miro 1 domain maps to 2 to 168 (RRDVRILLLG…FYYAQKAVLH (167 aa)). Residues Gly-16, Lys-17, Thr-18, and Ser-19 each contribute to the GTP site. Thr-18 contributes to the Mg(2+) binding site. Asp-57 lines the Mg(2+) pocket. A GTP-binding site is contributed by Ser-59. Lys-96 is covalently cross-linked (Glycyl lysine isopeptide (Lys-Gly) (interchain with G-Cter in ubiquitin)). GTP-binding residues include Asn-118, Lys-119, Asp-121, Ala-149, and Lys-150. A Glycyl lysine isopeptide (Lys-Gly) (interchain with G-Cter in ubiquitin) cross-link involves residue Lys-119. Lys-164 participates in a covalent cross-link: Glycyl lysine isopeptide (Lys-Gly) (interchain with G-Cter in ubiquitin). EF-hand domains are found at residues 184 to 219 (ACAQ…CFGH) and 304 to 339 (RGYQ…FSGA). Ca(2+) contacts are provided by Asp-197, Asp-199, Asp-201, Glu-208, Asp-317, Asp-319, Asp-321, and Glu-328. Residues 415–578 (RSVLMCKVLG…FTQLATMATF (164 aa)) enclose the Miro 2 domain. The GTP site is built by Gly-427, Gly-429, Lys-430, Ser-431, and Ala-432. Ser-431 provides a ligand contact to Mg(2+). Position 473 (Glu-473) interacts with Mg(2+). GTP-binding residues include Lys-527, Asp-529, and Cys-558. The helical; Anchor for type IV membrane protein transmembrane segment at 595 to 617 (GVLVAVGTAVAAVLSFSLYRVLV) threads the bilayer. At 618-620 (KSR) the chain is on the mitochondrial intermembrane side.

This sequence belongs to the mitochondrial Rho GTPase family. As to quaternary structure, homodimer. Interacts with the kinesin-binding proteins TRAK1/OIP106 and TRAK2/GRIF1, forming a link between mitochondria and the trafficking apparatus of the microtubules. Interacts with ARMCX3. Found in a complex with KIF5B, OGT, RHOT1 and TRAK1. In terms of processing, ubiquitinated by PRKN in a PINK1-dependent manner, leading to its degradation. In terms of tissue distribution, ubiquitously expressed.

The protein resides in the mitochondrion outer membrane. It catalyses the reaction GTP + H2O = GDP + phosphate + H(+). It carries out the reaction ATP + H2O = ADP + phosphate + H(+). The enzyme catalyses UTP + H2O = UDP + phosphate + H(+). Its function is as follows. Atypical mitochondrial nucleoside-triphosphatase (NTPase) involved in mitochondrial trafficking. Probably involved in control of anterograde transport of mitochondria and their subcellular distribution. Can hydrolyze GTP, ATP and UTP. This is Mitochondrial Rho GTPase 2 (Rhot2) from Mus musculus (Mouse).